The following is a 503-amino-acid chain: MEFSVKSGSPEKQRSACIVVGVFEPRRLSPIAEQLDKISDGYISALLRRGELEGKVGQTLLLHHVPNILSERILLIGCGKERELDERQYKQVIQKTINTLNDTGSMEAVCFLTELHVKGRNTYWKVRQAVETSKEALYSFDQLKSNKVEPRRPLRKLVFNVPTRRELTSGERAIQHGLAVAAGVKAAKDLGNMPPNICNAAYLASQARQLADAYSKNITTRVIGEQQMKELGMNAYLAVGQGSQNESLMSVIEYKGNPDAEARPIVLVGKGVTFDTGGISLKPGEAMDEMKYDMCGAASVYGVMRMVAELNLPLNVVGVLAGCENMPGGRAYRPGDVLTTMSGQTVEVLNTDAEGRLVLCDALTYVERFDPEVVIDVATLTGACVIALGHHISGLLSNHNPLAHELIGASEQAGDRAWRLPMADEYQDQLESNFADMANIGGRPGGAITAACFLARFTRKYNWAHLDVAGTAWRSGKAKGATGRPVALLSQFLLNRAGLNGDD.

Residues Lys270 and Asp275 each coordinate Mn(2+). The active site involves Lys282. 3 residues coordinate Mn(2+): Asp293, Asp352, and Glu354. The active site involves Arg356.

The protein belongs to the peptidase M17 family. The cofactor is Mn(2+).

The protein resides in the cytoplasm. The catalysed reaction is Release of an N-terminal amino acid, Xaa-|-Yaa-, in which Xaa is preferably Leu, but may be other amino acids including Pro although not Arg or Lys, and Yaa may be Pro. Amino acid amides and methyl esters are also readily hydrolyzed, but rates on arylamides are exceedingly low.. It carries out the reaction Release of an N-terminal amino acid, preferentially leucine, but not glutamic or aspartic acids.. Its function is as follows. Presumably involved in the processing and regular turnover of intracellular proteins. Catalyzes the removal of unsubstituted N-terminal amino acids from various peptides. The chain is Probable cytosol aminopeptidase from Erwinia tasmaniensis (strain DSM 17950 / CFBP 7177 / CIP 109463 / NCPPB 4357 / Et1/99).